The following is a 199-amino-acid chain: Recombination protein RecR (199 aa).

Residues 57–72 (CQSCRTYTEESLCPIC) form a C4-type zinc finger. A Toprim domain is found at 81 to 176 (STICVVETPA…VISRIAHGVP (96 aa)).

The protein belongs to the RecR family.

May play a role in DNA repair. It seems to be involved in an RecBC-independent recombinational process of DNA repair. It may act with RecF and RecO. The polypeptide is Recombination protein RecR (Shewanella sp. (strain MR-4)).